A 530-amino-acid polypeptide reads, in one-letter code: Arginine--tRNA ligase (530 aa).

Residues 113 to 123 (ANPTGPLHIGH) carry the 'HIGH' region motif.

It belongs to the class-I aminoacyl-tRNA synthetase family. Monomer.

The protein resides in the cytoplasm. The catalysed reaction is tRNA(Arg) + L-arginine + ATP = L-arginyl-tRNA(Arg) + AMP + diphosphate. The polypeptide is Arginine--tRNA ligase (Campylobacter jejuni subsp. jejuni serotype O:23/36 (strain 81-176)).